Reading from the N-terminus, the 226-residue chain is PKHD-type hydroxylase Daci_1172 (226 aa).

One can recognise a Fe2OG dioxygenase domain in the interval 78–178 (KVLPPRFNRY…RYASFFWTHS (101 aa)). Residues H96, D98, and H159 each contribute to the Fe cation site. 2-oxoglutarate is bound at residue R169.

Requires Fe(2+) as cofactor. L-ascorbate serves as cofactor.

The protein is PKHD-type hydroxylase Daci_1172 of Delftia acidovorans (strain DSM 14801 / SPH-1).